We begin with the raw amino-acid sequence, 213 residues long: MSSPSSLTQRNPTSSQEQSESVPQLRRQTSQHAVMSQTLTSAANLANLLPTGTLLAFTLLIPVFTSNGSCDYPTQVLTIVLLTLLSISCFLSSFTDSVKAEDGNVYYGFATRKGMWVFDYPDPDGLGLPNLSKYRIRIIDWIHAVLSVLVFGAVALRDKNAVSCFYPAPEQETKKVLDIVPMGVGVICGMLFLVFPARRHGIGYPVTGDGGRR.

Residues methionine 1–arginine 27 are disordered. A run of 4 helical transmembrane segments spans residues leucine 45 to threonine 65, threonine 74 to phenylalanine 94, isoleucine 136 to leucine 156, and valine 176 to proline 196.

The protein belongs to the plant DMP1 protein family. In terms of tissue distribution, expressed in leaves, siliques and roots (e.g. root hairs).

It localises to the endoplasmic reticulum membrane. In terms of biological role, involved in membrane remodeling. This is Protein DMP3 from Arabidopsis thaliana (Mouse-ear cress).